The following is a 116-amino-acid chain: Ribosome-binding factor A (116 aa).

The protein belongs to the RbfA family. Monomer. Binds 30S ribosomal subunits, but not 50S ribosomal subunits or 70S ribosomes.

It is found in the cytoplasm. In terms of biological role, one of several proteins that assist in the late maturation steps of the functional core of the 30S ribosomal subunit. Associates with free 30S ribosomal subunits (but not with 30S subunits that are part of 70S ribosomes or polysomes). Required for efficient processing of 16S rRNA. May interact with the 5'-terminal helix region of 16S rRNA. This Chlorobium phaeobacteroides (strain BS1) protein is Ribosome-binding factor A.